The sequence spans 337 residues: Holliday junction branch migration complex subunit RuvB (337 aa).

The segment at 1 to 181 (MQRLVEIERF…FGMNFRMQFY (181 aa)) is large ATPase domain (RuvB-L). Residues leucine 20, arginine 21, glycine 62, lysine 65, threonine 66, threonine 67, 128-130 (EDF), arginine 171, tyrosine 181, and arginine 218 contribute to the ATP site. Threonine 66 provides a ligand contact to Mg(2+). Residues 182-252 (SPEELSKIIS…RAQYALDELG (71 aa)) are small ATPAse domain (RuvB-S). The tract at residues 255–337 (SYGFDEMDIK…MPALDDGGLF (83 aa)) is head domain (RuvB-H). DNA is bound by residues arginine 309 and arginine 314.

Belongs to the RuvB family. In terms of assembly, homohexamer. Forms an RuvA(8)-RuvB(12)-Holliday junction (HJ) complex. HJ DNA is sandwiched between 2 RuvA tetramers; dsDNA enters through RuvA and exits via RuvB. An RuvB hexamer assembles on each DNA strand where it exits the tetramer. Each RuvB hexamer is contacted by two RuvA subunits (via domain III) on 2 adjacent RuvB subunits; this complex drives branch migration. In the full resolvosome a probable DNA-RuvA(4)-RuvB(12)-RuvC(2) complex forms which resolves the HJ.

The protein resides in the cytoplasm. It catalyses the reaction ATP + H2O = ADP + phosphate + H(+). Functionally, the RuvA-RuvB-RuvC complex processes Holliday junction (HJ) DNA during genetic recombination and DNA repair, while the RuvA-RuvB complex plays an important role in the rescue of blocked DNA replication forks via replication fork reversal (RFR). RuvA specifically binds to HJ cruciform DNA, conferring on it an open structure. The RuvB hexamer acts as an ATP-dependent pump, pulling dsDNA into and through the RuvAB complex. RuvB forms 2 homohexamers on either side of HJ DNA bound by 1 or 2 RuvA tetramers; 4 subunits per hexamer contact DNA at a time. Coordinated motions by a converter formed by DNA-disengaged RuvB subunits stimulates ATP hydrolysis and nucleotide exchange. Immobilization of the converter enables RuvB to convert the ATP-contained energy into a lever motion, pulling 2 nucleotides of DNA out of the RuvA tetramer per ATP hydrolyzed, thus driving DNA branch migration. The RuvB motors rotate together with the DNA substrate, which together with the progressing nucleotide cycle form the mechanistic basis for DNA recombination by continuous HJ branch migration. Branch migration allows RuvC to scan DNA until it finds its consensus sequence, where it cleaves and resolves cruciform DNA. In Sulfurimonas denitrificans (strain ATCC 33889 / DSM 1251) (Thiomicrospira denitrificans (strain ATCC 33889 / DSM 1251)), this protein is Holliday junction branch migration complex subunit RuvB.